The sequence spans 319 residues: Acetyl-coenzyme A carboxylase carboxyl transferase subunit alpha (319 aa).

The CoA carboxyltransferase C-terminal domain maps to 35–296; it reads NLDEEVQRLR…KAQLLIDLAE (262 aa).

The protein belongs to the AccA family. As to quaternary structure, acetyl-CoA carboxylase is a heterohexamer composed of biotin carboxyl carrier protein (AccB), biotin carboxylase (AccC) and two subunits each of ACCase subunit alpha (AccA) and ACCase subunit beta (AccD).

The protein resides in the cytoplasm. It carries out the reaction N(6)-carboxybiotinyl-L-lysyl-[protein] + acetyl-CoA = N(6)-biotinyl-L-lysyl-[protein] + malonyl-CoA. Its pathway is lipid metabolism; malonyl-CoA biosynthesis; malonyl-CoA from acetyl-CoA: step 1/1. Component of the acetyl coenzyme A carboxylase (ACC) complex. First, biotin carboxylase catalyzes the carboxylation of biotin on its carrier protein (BCCP) and then the CO(2) group is transferred by the carboxyltransferase to acetyl-CoA to form malonyl-CoA. This chain is Acetyl-coenzyme A carboxylase carboxyl transferase subunit alpha, found in Photorhabdus laumondii subsp. laumondii (strain DSM 15139 / CIP 105565 / TT01) (Photorhabdus luminescens subsp. laumondii).